The sequence spans 228 residues: 7-cyano-7-deazaguanine synthase (228 aa).

8 to 18 (LSGGLDSTTCL) is a binding site for ATP. Zn(2+) is bound by residues C188, C198, C201, and C204.

The protein belongs to the QueC family. Zn(2+) serves as cofactor.

The enzyme catalyses 7-carboxy-7-deazaguanine + NH4(+) + ATP = 7-cyano-7-deazaguanine + ADP + phosphate + H2O + H(+). Its pathway is purine metabolism; 7-cyano-7-deazaguanine biosynthesis. Catalyzes the ATP-dependent conversion of 7-carboxy-7-deazaguanine (CDG) to 7-cyano-7-deazaguanine (preQ(0)). In Legionella pneumophila subsp. pneumophila (strain Philadelphia 1 / ATCC 33152 / DSM 7513), this protein is 7-cyano-7-deazaguanine synthase.